Here is a 70-residue protein sequence, read N- to C-terminus: Large ribosomal subunit protein bL31c (70 aa).

The protein belongs to the bacterial ribosomal protein bL31 family. Type A subfamily. In terms of assembly, part of the 50S ribosomal subunit.

It localises to the plastid. It is found in the chloroplast. Its function is as follows. Binds the 23S rRNA. The protein is Large ribosomal subunit protein bL31c of Pyropia yezoensis (Susabi-nori).